We begin with the raw amino-acid sequence, 264 residues long: MKQYLQLLEDILQNGVYKDDRTGTGTLSVFGRQLRFDLREGFPLLTTKKLHIRSIIHELLWFLSGDTNIRYLKENGVTIWDEWADEKGDLGPVYGAQWRSWRGADGRTIDQISEVIEQIKTNPNSRRLLVSAWNVAELDHMKLPPCHYAFQFYVENGTLSCMWQQRSVDTFLGLPFNIASYALLTYMVAQQCDLQPKELIFTGGDVHLYMNHIEQAKLQLTREPRPLPKLIIKRKPASIFEYRFEDFEIVDYDPHPHIKADVSV.

Residue Arg21 coordinates dUMP. Residue His51 coordinates (6R)-5,10-methylene-5,6,7,8-tetrahydrofolate. Residue 126-127 coordinates dUMP; it reads RR. The active-site Nucleophile is Cys146. Residues 166-169, Asn177, and 207-209 each bind dUMP; these read RSVD and HLY. Position 169 (Asp169) interacts with (6R)-5,10-methylene-5,6,7,8-tetrahydrofolate. Ser263 provides a ligand contact to (6R)-5,10-methylene-5,6,7,8-tetrahydrofolate.

This sequence belongs to the thymidylate synthase family. Bacterial-type ThyA subfamily. As to quaternary structure, homodimer.

Its subcellular location is the cytoplasm. The catalysed reaction is dUMP + (6R)-5,10-methylene-5,6,7,8-tetrahydrofolate = 7,8-dihydrofolate + dTMP. It participates in pyrimidine metabolism; dTTP biosynthesis. Catalyzes the reductive methylation of 2'-deoxyuridine-5'-monophosphate (dUMP) to 2'-deoxythymidine-5'-monophosphate (dTMP) while utilizing 5,10-methylenetetrahydrofolate (mTHF) as the methyl donor and reductant in the reaction, yielding dihydrofolate (DHF) as a by-product. This enzymatic reaction provides an intracellular de novo source of dTMP, an essential precursor for DNA biosynthesis. This chain is Thymidylate synthase, found in Anoxybacillus flavithermus (strain DSM 21510 / WK1).